Consider the following 389-residue polypeptide: Glutamate 5-kinase (389 aa).

An ATP-binding site is contributed by Lys16. Substrate-binding residues include Ser56, Asp143, and Asn155. Residue 175-176 (SD) participates in ATP binding. A PUA domain is found at 281 to 358 (AGELHVDDGA…AEIEAILGYA (78 aa)).

This sequence belongs to the glutamate 5-kinase family.

The protein localises to the cytoplasm. It carries out the reaction L-glutamate + ATP = L-glutamyl 5-phosphate + ADP. It functions in the pathway amino-acid biosynthesis; L-proline biosynthesis; L-glutamate 5-semialdehyde from L-glutamate: step 1/2. Its function is as follows. Catalyzes the transfer of a phosphate group to glutamate to form L-glutamate 5-phosphate. The chain is Glutamate 5-kinase from Rhizobium etli (strain CIAT 652).